A 24-amino-acid polypeptide reads, in one-letter code: Brevinin-1PTa (24 aa).

Cysteine 18 and cysteine 24 are oxidised to a cystine.

As to expression, expressed by the skin glands.

It localises to the secreted. In terms of biological role, has antibacterial activity against the Gram-positive bacterium S.aureus ATCC 25923 (MIC=3 uM) and the Gram-negative bacterium E.coli ATCC 25726 (MIC=24 uM). The chain is Brevinin-1PTa from Pulchrana picturata (Malaysian fire frog).